Consider the following 573-residue polypeptide: 2-succinyl-5-enolpyruvyl-6-hydroxy-3-cyclohexene-1-carboxylate synthase (573 aa).

It belongs to the TPP enzyme family. MenD subfamily. In terms of assembly, homodimer. Mg(2+) serves as cofactor. Mn(2+) is required as a cofactor. It depends on thiamine diphosphate as a cofactor.

It carries out the reaction isochorismate + 2-oxoglutarate + H(+) = 5-enolpyruvoyl-6-hydroxy-2-succinyl-cyclohex-3-ene-1-carboxylate + CO2. The protein operates within quinol/quinone metabolism; 1,4-dihydroxy-2-naphthoate biosynthesis; 1,4-dihydroxy-2-naphthoate from chorismate: step 2/7. Its pathway is quinol/quinone metabolism; menaquinone biosynthesis. Its function is as follows. Catalyzes the thiamine diphosphate-dependent decarboxylation of 2-oxoglutarate and the subsequent addition of the resulting succinic semialdehyde-thiamine pyrophosphate anion to isochorismate to yield 2-succinyl-5-enolpyruvyl-6-hydroxy-3-cyclohexene-1-carboxylate (SEPHCHC). This chain is 2-succinyl-5-enolpyruvyl-6-hydroxy-3-cyclohexene-1-carboxylate synthase, found in Shewanella baltica (strain OS195).